The chain runs to 204 residues: Octanoyltransferase (204 aa).

Positions 30–204 (CETPDEIWLL…QSFINQLTDV (175 aa)) constitute a BPL/LPL catalytic domain. Residues 69–76 (RGGQITYH), 136–138 (SLG), and 149–151 (GIA) contribute to the substrate site. C167 (acyl-thioester intermediate) is an active-site residue.

This sequence belongs to the LipB family.

It localises to the cytoplasm. The catalysed reaction is octanoyl-[ACP] + L-lysyl-[protein] = N(6)-octanoyl-L-lysyl-[protein] + holo-[ACP] + H(+). It functions in the pathway protein modification; protein lipoylation via endogenous pathway; protein N(6)-(lipoyl)lysine from octanoyl-[acyl-carrier-protein]: step 1/2. Functionally, catalyzes the transfer of endogenously produced octanoic acid from octanoyl-acyl-carrier-protein onto the lipoyl domains of lipoate-dependent enzymes. Lipoyl-ACP can also act as a substrate although octanoyl-ACP is likely to be the physiological substrate. This Nitrosomonas europaea (strain ATCC 19718 / CIP 103999 / KCTC 2705 / NBRC 14298) protein is Octanoyltransferase.